Here is a 441-residue protein sequence, read N- to C-terminus: Ribosomal protein uS12 methylthiotransferase RimO (441 aa).

The MTTase N-terminal domain occupies 8-118 (PKIGFVSLGC…VLQHVHHYVP (111 aa)). Cysteine 17, cysteine 53, cysteine 82, cysteine 150, cysteine 154, and cysteine 157 together coordinate [4Fe-4S] cluster. The Radical SAM core domain maps to 136–373 (LTPRHYAYLK…MQLQQQISAE (238 aa)). Residues 376–441 (QEKVGREILV…DEYDLWGSRV (66 aa)) form the TRAM domain.

It belongs to the methylthiotransferase family. RimO subfamily. [4Fe-4S] cluster serves as cofactor.

The protein resides in the cytoplasm. The catalysed reaction is L-aspartate(89)-[ribosomal protein uS12]-hydrogen + (sulfur carrier)-SH + AH2 + 2 S-adenosyl-L-methionine = 3-methylsulfanyl-L-aspartate(89)-[ribosomal protein uS12]-hydrogen + (sulfur carrier)-H + 5'-deoxyadenosine + L-methionine + A + S-adenosyl-L-homocysteine + 2 H(+). In terms of biological role, catalyzes the methylthiolation of an aspartic acid residue of ribosomal protein uS12. This chain is Ribosomal protein uS12 methylthiotransferase RimO, found in Salmonella agona (strain SL483).